Consider the following 706-residue polypeptide: Coiled-coil domain-containing protein 177 (706 aa).

A compositionally biased stretch (acidic residues) spans 1–11 (MVDPVPEEEKE). Disordered stretches follow at residues 1-63 (MVDP…GGRR), 179-262 (ASAL…LREL), and 268-287 (ASAR…NPLG). Composition is skewed to low complexity over residues 28–49 (PPDA…AAAP) and 179–209 (ASAL…RRTS). Residues 210–221 (PSPPARSRPPPA) show a composition bias toward pro residues. Residues 242-257 (ALSSESGASSSSYSGE) are compositionally biased toward low complexity. Position 310 is a phosphoserine (S310). The stretch at 360 to 624 (AAHGQWEQQR…QTRLEKERAQ (265 aa)) forms a coiled coil. 4 disordered regions span residues 364 to 386 (QWEQ…KQRA), 398 to 425 (VEER…RSEE), 448 to 580 (DDRL…EREH), and 651 to 706 (ERSE…LDRK). Residues 368–386 (QRVRAEQRREREEREKQRA) are compositionally biased toward basic and acidic residues. Basic and acidic residues-rich tracts occupy residues 448-529 (DDRL…REGL), 548-580 (QEQR…EREH), and 651-663 (ERSE…RRSA). The segment covering 664 to 674 (LESARSTARAS) has biased composition (low complexity). The segment covering 676-706 (HVREKVREETNTRSFDRMVREAQLHASLDRK) has biased composition (basic and acidic residues).

The protein is Coiled-coil domain-containing protein 177 (Ccdc177) of Mus musculus (Mouse).